Reading from the N-terminus, the 249-residue chain is 2,3-bisphosphoglycerate-dependent phosphoglycerate mutase (249 aa).

Substrate-binding positions include 9 to 16 (RHGQSQWN), 22 to 23 (TG), R61, 88 to 91 (ERHY), K99, 115 to 116 (RR), and 184 to 185 (GN). Catalysis depends on H10, which acts as the Tele-phosphohistidine intermediate. E88 serves as the catalytic Proton donor/acceptor.

It belongs to the phosphoglycerate mutase family. BPG-dependent PGAM subfamily. Homodimer.

The enzyme catalyses (2R)-2-phosphoglycerate = (2R)-3-phosphoglycerate. Its pathway is carbohydrate degradation; glycolysis; pyruvate from D-glyceraldehyde 3-phosphate: step 3/5. Its function is as follows. Catalyzes the interconversion of 2-phosphoglycerate and 3-phosphoglycerate. The sequence is that of 2,3-bisphosphoglycerate-dependent phosphoglycerate mutase from Xanthomonas axonopodis pv. citri (strain 306).